Consider the following 357-residue polypeptide: MPQTLHVHSRVKDYDILFTDHVLKTLADCLGERKQRKLLFITDQTVYHLYQTLFEEFAQQYNAFVHVCPPGGQSKSLERVSAIYDQLIAENFSKKDMIITIGGGVVGDLGGFVAATYYRGIPYIQIPTTLLSQVDSSIGGKVGVHFKGLTNMIGSIYPPEAIIISTTFLETLPQREFSCGISEMLKIGFIHDRPLFQQLRDFQKETDKQGLERLIYQSISNKKRIVEQDEFENGLRMSLNFGHTLGHAIESLCHHDFYHHGEAIAIGMVVDAKLAVSKRLLPKEDLDSLLQVFERYQLPTTLERADVSATSLFDVFKTDKKNSEQHIIFILPTETGFTTLAINKDDHQFVEKLDSLL.

NAD(+)-binding positions include Gly104–Asp108, Thr128–Thr129, Lys141, and Phe168–Thr171. Glu183, His243, and His260 together coordinate Zn(2+).

It belongs to the sugar phosphate cyclases superfamily. Dehydroquinate synthase family. The cofactor is NAD(+). Co(2+) serves as cofactor. Zn(2+) is required as a cofactor.

It is found in the cytoplasm. It catalyses the reaction 7-phospho-2-dehydro-3-deoxy-D-arabino-heptonate = 3-dehydroquinate + phosphate. It participates in metabolic intermediate biosynthesis; chorismate biosynthesis; chorismate from D-erythrose 4-phosphate and phosphoenolpyruvate: step 2/7. Its function is as follows. Catalyzes the conversion of 3-deoxy-D-arabino-heptulosonate 7-phosphate (DAHP) to dehydroquinate (DHQ). The protein is 3-dehydroquinate synthase of Streptococcus pyogenes serotype M18 (strain MGAS8232).